The primary structure comprises 343 residues: Arginine N-succinyltransferase (343 aa).

Residue Leu-125 participates in succinyl-CoA binding. His-229 (proton donor) is an active-site residue.

This sequence belongs to the arginine N-succinyltransferase family.

It catalyses the reaction succinyl-CoA + L-arginine = N(2)-succinyl-L-arginine + CoA + H(+). It participates in amino-acid degradation; L-arginine degradation via AST pathway; L-glutamate and succinate from L-arginine: step 1/5. Functionally, catalyzes the transfer of succinyl-CoA to arginine to produce N(2)-succinylarginine. This Photorhabdus laumondii subsp. laumondii (strain DSM 15139 / CIP 105565 / TT01) (Photorhabdus luminescens subsp. laumondii) protein is Arginine N-succinyltransferase.